Reading from the N-terminus, the 322-residue chain is Phosphatidylserine decarboxylase proenzyme (322 aa).

Active-site charge relay system; for autoendoproteolytic cleavage activity residues include Asp-90, His-147, and Ser-254. Ser-254 serves as the catalytic Schiff-base intermediate with substrate; via pyruvic acid; for decarboxylase activity. The residue at position 254 (Ser-254) is a Pyruvic acid (Ser); by autocatalysis. Positions 295–322 (VEPAPLPTEEIKAEHDASPLVDNKKDDT) are disordered. The segment covering 303 to 322 (EEIKAEHDASPLVDNKKDDT) has biased composition (basic and acidic residues).

It belongs to the phosphatidylserine decarboxylase family. PSD-B subfamily. Prokaryotic type I sub-subfamily. As to quaternary structure, heterodimer of a large membrane-associated beta subunit and a small pyruvoyl-containing alpha subunit. Pyruvate serves as cofactor. Post-translationally, is synthesized initially as an inactive proenzyme. Formation of the active enzyme involves a self-maturation process in which the active site pyruvoyl group is generated from an internal serine residue via an autocatalytic post-translational modification. Two non-identical subunits are generated from the proenzyme in this reaction, and the pyruvate is formed at the N-terminus of the alpha chain, which is derived from the carboxyl end of the proenzyme. The autoendoproteolytic cleavage occurs by a canonical serine protease mechanism, in which the side chain hydroxyl group of the serine supplies its oxygen atom to form the C-terminus of the beta chain, while the remainder of the serine residue undergoes an oxidative deamination to produce ammonia and the pyruvoyl prosthetic group on the alpha chain. During this reaction, the Ser that is part of the protease active site of the proenzyme becomes the pyruvoyl prosthetic group, which constitutes an essential element of the active site of the mature decarboxylase.

It is found in the cell membrane. It catalyses the reaction a 1,2-diacyl-sn-glycero-3-phospho-L-serine + H(+) = a 1,2-diacyl-sn-glycero-3-phosphoethanolamine + CO2. It functions in the pathway phospholipid metabolism; phosphatidylethanolamine biosynthesis; phosphatidylethanolamine from CDP-diacylglycerol: step 2/2. Functionally, catalyzes the formation of phosphatidylethanolamine (PtdEtn) from phosphatidylserine (PtdSer). In Salmonella agona (strain SL483), this protein is Phosphatidylserine decarboxylase proenzyme.